A 152-amino-acid chain; its full sequence is Ribosome maturation factor RimP (152 aa).

This sequence belongs to the RimP family.

It localises to the cytoplasm. Required for maturation of 30S ribosomal subunits. In Porphyromonas gingivalis (strain ATCC 33277 / DSM 20709 / CIP 103683 / JCM 12257 / NCTC 11834 / 2561), this protein is Ribosome maturation factor RimP.